The following is a 141-amino-acid chain: Cystatin (141 aa).

Positions 1–26 (MVHSQLPVAGPLRLLCALLLLPSATM) are cleaved as a signal peptide. The region spanning 29-129 (GGLSPRSVTD…CHFQVWSRPW (101 aa)) is the Cystatin domain. The short motif at 73–77 (QVVSG) is the Secondary area of contact element. Disulfide bonds link C91–C107 and C120–C140.

It belongs to the cystatin family. As to expression, expressed at a low level by the venom gland (at protein level).

The protein localises to the secreted. Inhibits various C1 cysteine proteases including cathepsin L, papain and cathepsin B. This protein has no toxic activity and its function in the venom is unknown. It may play a role as a housekeeping or regulatory protein. The chain is Cystatin from Pseudechis australis (Mulga snake).